Consider the following 389-residue polypeptide: MVTVEEVRRAQRAKGPATIMAIGTATPSNCVDQSTYPDYYFRITNSEHMTELKEKFKRMCDKSMINKRYMHLTEEILKENPNICEYMAPSLDARQDIVVVEVPKLGKEAAQKAIKEWGQPKSKITHVVFCTTSGVDMPGADYQLTKLLGLRPSVKRLMMYQQGCFAGGTVIRLAKDLAENNKGARVLVVCSEITAVTFRGPSDTHLDSMVGQALFGDRAAAMIIGSDPLPEVERPLFELVSAAQTLLPDSEGAIDGHLREVGLTFHLLKDVPGLISKNIEKSLIEAFQPLGISDWNSIFWIAHPGGPAILDQVELKLSLKPEKLRATRQVLSDYGNMSSACVLFILDEMRKASSKEGLSTTGEGLDWGVLFGFGPGLTVETVVLHSVST.

Residue cysteine 164 is part of the active site.

The protein belongs to the thiolase-like superfamily. Chalcone/stilbene synthases family.

The catalysed reaction is (E)-4-coumaroyl-CoA + 3 malonyl-CoA + 3 H(+) = 2',4,4',6'-tetrahydroxychalcone + 3 CO2 + 4 CoA. It functions in the pathway secondary metabolite biosynthesis; flavonoid biosynthesis. Its function is as follows. The primary product of this enzyme is 4,2',4',6'-tetrahydroxychalcone (also termed naringenin-chalcone or chalcone) which can under specific conditions spontaneously isomerize into naringenin. This Solanum lycopersicum (Tomato) protein is Chalcone synthase 2 (CHS2).